Reading from the N-terminus, the 289-residue chain is Pantothenate synthetase (289 aa).

30–37 lines the ATP pocket; the sequence is MGYLHKGH. Catalysis depends on H37, which acts as the Proton donor. Position 61 (Q61) interacts with (R)-pantoate. Residue Q61 coordinates beta-alanine. 147-150 contributes to the ATP binding site; sequence GEKD. Q153 is a binding site for (R)-pantoate. Residues V176 and 184–187 contribute to the ATP site; that span reads CSSR.

It belongs to the pantothenate synthetase family. In terms of assembly, homodimer.

The protein resides in the cytoplasm. It carries out the reaction (R)-pantoate + beta-alanine + ATP = (R)-pantothenate + AMP + diphosphate + H(+). It functions in the pathway cofactor biosynthesis; (R)-pantothenate biosynthesis; (R)-pantothenate from (R)-pantoate and beta-alanine: step 1/1. Its function is as follows. Catalyzes the condensation of pantoate with beta-alanine in an ATP-dependent reaction via a pantoyl-adenylate intermediate. In Brucella anthropi (strain ATCC 49188 / DSM 6882 / CCUG 24695 / JCM 21032 / LMG 3331 / NBRC 15819 / NCTC 12168 / Alc 37) (Ochrobactrum anthropi), this protein is Pantothenate synthetase.